The chain runs to 510 residues: Cobyric acid synthase (510 aa).

In terms of domain architecture, GATase cobBQ-type spans 262-460; sequence EIKVGIIKLP…IHGIFENDEW (199 aa). Residue Cys-343 is the Nucleophile of the active site. His-452 is a catalytic residue.

Belongs to the CobB/CobQ family. CobQ subfamily.

It functions in the pathway cofactor biosynthesis; adenosylcobalamin biosynthesis. Functionally, catalyzes amidations at positions B, D, E, and G on adenosylcobyrinic A,C-diamide. NH(2) groups are provided by glutamine, and one molecule of ATP is hydrogenolyzed for each amidation. This is Cobyric acid synthase from Prochlorococcus marinus (strain MIT 9515).